The sequence spans 295 residues: Protease HtpX (295 aa).

Transmembrane regions (helical) follow at residues 4-24 and 42-62; these read ILLF…TLSL and QLLV…LFIS. H147 serves as a coordination point for Zn(2+). E148 is an active-site residue. Zn(2+) is bound at residue H151. A run of 2 helical transmembrane segments spans residues 158 to 178 and 195 to 215; these read VTLA…ARII and IAYF…ASAI. E224 serves as a coordination point for Zn(2+).

Belongs to the peptidase M48B family. The cofactor is Zn(2+).

It is found in the cell inner membrane. The polypeptide is Protease HtpX (Pseudomonas fluorescens (strain SBW25)).